We begin with the raw amino-acid sequence, 101 residues long: Protein S100-A4 (101 aa).

Lys-7 bears the N6-acetyllysine mark. EF-hand domains are found at residues 12–47 (MVST…SFLG) and 50–85 (TDEA…VAMM). The Ca(2+) site is built by Lys-28 and Glu-33. Position 35 is an N6-acetyllysine (Lys-35). Residues Asp-63, Asn-65, Asp-67, Glu-69, and Glu-74 each coordinate Ca(2+).

Belongs to the S-100 family. Homodimer. Interacts with PPFIBP1 in a calcium-dependent mode. Interacts with PGLYRP1; this complex acts as a chemoattractant that promotes lymphocyte movement. Interacts with MYH9; this interaction increases cell motility. Interacts with Annexin 2/ANXA2. Interacts with TP53; this interaction promotes TP53 degradation. Interacts with CCR5 and CXCR3. Interacts with FCGR3A; this interaction inhibits PKC-dependent phosphorylation of FCGR3A.

The protein localises to the secreted. It is found in the nucleus. It localises to the cytoplasm. In terms of biological role, calcium-binding protein that plays a role in various cellular processes including motility, angiogenesis, cell differentiation, apoptosis, and autophagy. Increases cell motility and invasiveness by interacting with non-muscle myosin heavy chain (NMMHC) IIA/MYH9. Mechanistically, promotes filament depolymerization and increases the amount of soluble myosin-IIA, resulting in the formation of stable protrusions facilitating chemotaxis. Also modulates the pro-apoptotic function of TP53 by binding to its C-terminal transactivation domain within the nucleus and reducing its protein levels. Within the extracellular space, stimulates cytokine production including granulocyte colony-stimulating factor and CCL24 from T-lymphocytes. In addition, stimulates T-lymphocyte chemotaxis by acting as a chemoattractant complex with PGLYRP1 that promotes lymphocyte migration via CCR5 and CXCR3 receptors. The sequence is that of Protein S100-A4 (S100A4) from Canis lupus familiaris (Dog).